A 601-amino-acid chain; its full sequence is Glutamine--fructose-6-phosphate aminotransferase [isomerizing] (601 aa).

Residue Cys-2 is the Nucleophile; for GATase activity of the active site. One can recognise a Glutamine amidotransferase type-2 domain in the interval 2–214 (CGITGYIGTD…NGDIAHLTET (213 aa)). SIS domains lie at 281–420 (STET…ARNA) and 453–591 (IGRE…IDKP). The active-site For Fru-6P isomerization activity is Lys-596.

As to quaternary structure, homodimer.

The protein resides in the cytoplasm. It carries out the reaction D-fructose 6-phosphate + L-glutamine = D-glucosamine 6-phosphate + L-glutamate. Functionally, catalyzes the first step in hexosamine metabolism, converting fructose-6P into glucosamine-6P using glutamine as a nitrogen source. The protein is Glutamine--fructose-6-phosphate aminotransferase [isomerizing] of Halobacterium salinarum (strain ATCC 700922 / JCM 11081 / NRC-1) (Halobacterium halobium).